Here is a 1918-residue protein sequence, read N- to C-terminus: NFX1-type zinc finger-containing protein 1 (1918 aa).

Residues 1–12 (MEERRPHLDARP) are compositionally biased toward basic and acidic residues. 2 disordered regions span residues 1 to 58 (MEER…RANN) and 75 to 140 (RNPH…QPQQ). The span at 30–42 (RARNQANNPPANA) shows a compositional bias: low complexity. The segment covering 82–105 (RNQEGHASDEARDQRHDQENDTRW) has biased composition (basic and acidic residues). The span at 120-129 (SNDNFQQWRT) shows a compositional bias: polar residues. Residues 286–313 (DIEEETEKNLEKVQTIIEHLQEKRREGT) are a coiled coil. Disordered regions lie at residues 796-819 (SVSPAGPENTAQAEGDEEEEGEEE) and 876-896 (TAAGQEQATGEWQTQRNQKKK). Acidic residues predominate over residues 809–819 (EGDEEEEGEEE). Polar residues predominate over residues 877–887 (AAGQEQATGEW). Positions 886-967 (EWQTQRNQKK…TSAERMAELR (82 aa)) form a coiled coil. NF-X1-type zinc fingers lie at residues 1298-1320 (CGHVCTRACHPYDSSHKEFQCMK), 1330-1346 (GHRCPLVCFQECQPCQV), 1382-1400 (CGHRCSHPCGEDCVQLCSE), 1441-1463 (CGHPCPGSCHSCFEGRFHERCQQ), 1471-1488 (CSHKCQEPCIGECPPCQR), and 1546-1564 (CGHPCIGLCGEPCPKKCRI). The stretch at 1741 to 1820 (LAKKRLSFTS…EKMEALKATL (80 aa)) forms a coiled coil. Residues 1827 to 1898 (ISEEERVQIV…LASEMDGAQH (72 aa)) form an RZ-type zinc finger. Residues cysteine 1849, histidine 1853, cysteine 1869, and cysteine 1872 each contribute to the Zn(2+) site.

This sequence belongs to the ZNFX1 family. In terms of assembly, interacts with MAVS. Widely expressed.

It is found in the mitochondrion outer membrane. The protein localises to the cytoplasm. The protein resides in the stress granule. RNA-binding protein that initiates the antiviral response and is required to restrict the replication of RNA viruses. Acts as a double-stranded RNA (dsRNA) sensor that recognizes viral RNA and then interacts with MAVS to initiate the type I interferon response. Also required for immunity against some bacteria, such as mycobacteria. The sequence is that of NFX1-type zinc finger-containing protein 1 from Homo sapiens (Human).